We begin with the raw amino-acid sequence, 156 residues long: Endoribonuclease YbeY (156 aa).

The Zn(2+) site is built by H117, H121, and H127.

It belongs to the endoribonuclease YbeY family. The cofactor is Zn(2+).

The protein resides in the cytoplasm. Functionally, single strand-specific metallo-endoribonuclease involved in late-stage 70S ribosome quality control and in maturation of the 3' terminus of the 16S rRNA. The chain is Endoribonuclease YbeY from Shewanella pealeana (strain ATCC 700345 / ANG-SQ1).